A 249-amino-acid chain; its full sequence is Low affinity immunoglobulin gamma Fc region receptor III-A (249 aa).

Positions 1–20 (MWQLLLPTALVLTAFSGIQA) are cleaved as a signal peptide. The Extracellular portion of the chain corresponds to 21–203 (GLQKAVVNLD…SPSMFPPWHQ (183 aa)). Ig-like C2-type domains are found at residues 22–102 (LQKA…VQLE) and 119–188 (EGDP…FRIS). Cystine bridges form between Cys46–Cys88 and Cys127–Cys171. N-linked (GlcNAc...) asparagine glycosylation is found at Asn62, Asn164, and Asn179. Residues 204-224 (ITFCLLIGLLFAIDTVLYFSV) form a helical membrane-spanning segment. At 225–249 (RRGLQSPVADYEEPKIQWSKEPQDK) the chain is on the cytoplasmic side. Tyr235 carries the phosphotyrosine modification.

Forms a heterooligomeric complex with ITAM-containing signaling subunits FCER1G. Interacts (via transmembrane domain) with signaling subunits; this interaction is a prerequisite for receptor complex expression on the cell surface and intracellular signal transduction. Binds the Fc region of antigen-complexed IgG. In terms of processing, N-glycosylated. Phosphorylated following receptor ligation. In terms of tissue distribution, detected on myeloid cells, peripheral blood monocytes, splenic and bone marrow dendritic cells, and thioglycollate-elicited macrophages and neutrophils but absent from lymphoid populations with no expression observed on T cells, B cells, NK cells or other granulocytes (at protein level). Expressed in peripheral blood leukocytes, spleen, liver, thymus and small intestine. Expressed in splenic dendritic cell subsets (at protein level).

Its subcellular location is the cell membrane. Receptor for the invariable Fc fragment of immunoglobulin gamma (IgG). Binds with intermediate affinity to both IgG2a and IgG2b. Can bind to IgG2a and IgG2b monomers. Does not display binding to IgG1 or IgG3. Recognizes neutralizing virus-specific IgGs displayed on the cell surface of infected cells and triggers antibody-dependent cellular cytotoxicity (ADCC). Confers protection to lethal influenza virus infection. On splenic dendritic cells, uptakes antigen immune complexes and efficiently divert them into MHC class I and II antigen presentation pathways to provide for superior priming of CD4-positive and CD8-positive T cell immune responses. Mediates neutrophil activation by IgG complexes redundantly with FCGR2A. Plays a role in promoting bone resorption by enhancing osteoclast differentiation following binding to IgG2a. Also acts as a receptor for the Fc region of immunoglobulin epsilon (IgE). Binds with low affinity to both the a and b allotypes of IgE. Has also been shown to bind to IgE allotype a only but not to allotype b. Binds aggregated IgE but not the monomeric form and bound monomeric IgG is readily displaced by IgE complexes. Binding to IgE promotes macrophage-mediated phagocytosis, antigen presentation to T cells, production of pro-inflammatory cytokines and the late phase of cutaneous allergic reactions. Mediates enhanced ADCC in response to afucosylated IgGs. In Mus musculus (Mouse), this protein is Low affinity immunoglobulin gamma Fc region receptor III-A.